Reading from the N-terminus, the 492-residue chain is Catalase-2 (492 aa).

Residues histidine 65 and asparagine 138 contribute to the active site. Heme is bound at residue tyrosine 348.

This sequence belongs to the catalase family. In terms of assembly, homotetramer and heterotetramer. At least six or seven isozymes are produced from a mixture of 3 gene products. Interacts with NCA1. Interacts with LSD1. Heme serves as cofactor.

The protein localises to the cytoplasm. The protein resides in the cytosol. It localises to the peroxisome matrix. The enzyme catalyses 2 H2O2 = O2 + 2 H2O. Catalyzes the degradation of hydrogen peroxide (H(2)O(2)) generated by peroxisomal oxidases to water and oxygen, thereby protecting cells from the toxic effects of hydrogen peroxide. The sequence is that of Catalase-2 (CAT2) from Arabidopsis thaliana (Mouse-ear cress).